The sequence spans 451 residues: Exodeoxyribonuclease 7 large subunit (451 aa).

The protein belongs to the XseA family. Heterooligomer composed of large and small subunits.

The protein localises to the cytoplasm. The enzyme catalyses Exonucleolytic cleavage in either 5'- to 3'- or 3'- to 5'-direction to yield nucleoside 5'-phosphates.. Functionally, bidirectionally degrades single-stranded DNA into large acid-insoluble oligonucleotides, which are then degraded further into small acid-soluble oligonucleotides. This chain is Exodeoxyribonuclease 7 large subunit, found in Thiobacillus denitrificans (strain ATCC 25259 / T1).